A 175-amino-acid polypeptide reads, in one-letter code: SsrA-binding protein (175 aa).

Disordered stretches follow at residues 1 to 29 and 152 to 175; these read MTRNPQPDRSKTAPKNAKRDPVASGERDA and KRETDRRKTADRDAREAIARSRKS.

It belongs to the SmpB family.

It is found in the cytoplasm. Its function is as follows. Required for rescue of stalled ribosomes mediated by trans-translation. Binds to transfer-messenger RNA (tmRNA), required for stable association of tmRNA with ribosomes. tmRNA and SmpB together mimic tRNA shape, replacing the anticodon stem-loop with SmpB. tmRNA is encoded by the ssrA gene; the 2 termini fold to resemble tRNA(Ala) and it encodes a 'tag peptide', a short internal open reading frame. During trans-translation Ala-aminoacylated tmRNA acts like a tRNA, entering the A-site of stalled ribosomes, displacing the stalled mRNA. The ribosome then switches to translate the ORF on the tmRNA; the nascent peptide is terminated with the 'tag peptide' encoded by the tmRNA and targeted for degradation. The ribosome is freed to recommence translation, which seems to be the essential function of trans-translation. This Koribacter versatilis (strain Ellin345) protein is SsrA-binding protein.